The primary structure comprises 311 residues: Protoheme IX farnesyltransferase (311 aa).

The next 9 helical transmembrane spans lie at 32–52 (VMSL…VVVD), 53–73 (PLYG…AGAL), 98–118 (ISRG…VFLM), 120–140 (VLIN…YIVI), 153–173 (IVIG…AATG), 180–200 (FLLF…LCLF), 226–246 (ILVY…TGYA), 248–268 (IIYG…AYRL), and 285–305 (FFFS…EFLI).

The protein belongs to the UbiA prenyltransferase family. Protoheme IX farnesyltransferase subfamily.

The protein localises to the cell inner membrane. The catalysed reaction is heme b + (2E,6E)-farnesyl diphosphate + H2O = Fe(II)-heme o + diphosphate. It participates in porphyrin-containing compound metabolism; heme O biosynthesis; heme O from protoheme: step 1/1. Converts heme B (protoheme IX) to heme O by substitution of the vinyl group on carbon 2 of heme B porphyrin ring with a hydroxyethyl farnesyl side group. The protein is Protoheme IX farnesyltransferase of Bartonella bacilliformis (strain ATCC 35685 / KC583 / Herrer 020/F12,63).